A 713-amino-acid polypeptide reads, in one-letter code: U3 small nucleolar RNA-associated protein 8 (713 aa).

Thr95 bears the Phosphothreonine mark. A phosphoserine mark is found at Ser148 and Ser150.

In terms of assembly, interacts with snoRNA U3. Interacts with MPP10 and UTP25. Component of the ribosomal small subunit (SSU) processome composed of at least 40 protein subunits and snoRNA U3. In the absence of snoRNA3, forms a complex with other t-UTPs. This complex can associate with pre-18S ribosomal RNAs.

The protein localises to the nucleus. It localises to the nucleolus. Functionally, involved in nucleolar processing of pre-18S ribosomal RNA. Also has a role in nuclear tRNA export. It acts between the steps of tRNA maturation/aminoacylation and its subsequent translocation out of the nucleus. Required for optimal pre-ribosomal RNA transcription by RNA polymerase I together with a subset of U3 proteins required for transcription (t-UTPs). The polypeptide is U3 small nucleolar RNA-associated protein 8 (UTP8) (Saccharomyces cerevisiae (strain ATCC 204508 / S288c) (Baker's yeast)).